Reading from the N-terminus, the 429-residue chain is Phosphoribosylamine--glycine ligase (429 aa).

Positions 109-316 (KDFLARHQIP…LVELCLAAID (208 aa)) constitute an ATP-grasp domain. ATP is bound at residue 135-196 (VREQGAPIVV…EEFLDGEEAS (62 aa)). Positions 212–234 (SQDHKRVGDKDTGPNTGGMGAYS) are disordered. Residues 213–223 (QDHKRVGDKDT) show a composition bias toward basic and acidic residues. Positions 286 and 288 each coordinate Mg(2+).

It belongs to the GARS family. Requires Mg(2+) as cofactor. Mn(2+) is required as a cofactor.

It catalyses the reaction 5-phospho-beta-D-ribosylamine + glycine + ATP = N(1)-(5-phospho-beta-D-ribosyl)glycinamide + ADP + phosphate + H(+). The protein operates within purine metabolism; IMP biosynthesis via de novo pathway; N(1)-(5-phospho-D-ribosyl)glycinamide from 5-phospho-alpha-D-ribose 1-diphosphate: step 2/2. The protein is Phosphoribosylamine--glycine ligase of Vibrio vulnificus (strain YJ016).